A 1995-amino-acid chain; its full sequence is Myosin-14 (1995 aa).

Residues 1-46 (MAAVTMSVPGRKAPPRPGPVPEAAQPFLFTPRGPSAGGGPGSGTSP) form a disordered region. Alanine 2 carries the N-acetylalanine modification. A Myosin N-terminal SH3-like domain is found at 51-101 (TARRLVWVPSELHGFEAAALRDEGEEEAEVELAESGRRLRLPRDQIQRMNP). Residue serine 60 is modified to Phosphoserine. The 696-residue stretch at 105 to 800 (SKAEDMAELT…VLAQLEEERD (696 aa)) folds into the Myosin motor domain. Residue 198–205 (GESGAGKT) participates in ATP binding. The segment at 678 to 700 (LSRLMATLSNTNPSFVRCIVPNH) is actin-binding. Positions 803-832 (VTDIIVSFQAAARGYLARRAFQKRQQQQSA) constitute an IQ domain. Residues 862–1947 (LQVTRQDEVL…VTTLRNRLRR (1086 aa)) adopt a coiled-coil conformation. Threonine 1194 carries the phosphothreonine modification. Disordered stretches follow at residues 1371-1415 (EEAA…RRAA), 1592-1623 (QHERDLQGRDEAGEERRRQLAKQLRDAEVERD), 1905-1942 (EAEEEASRAQAGRRRLQRELEDVTESAESMNREVTTLR), and 1958-1995 (RQVFRLEEGVASDEEAEEAQPGSGPSPEPEGSPPAHPQ). Polar residues predominate over residues 1930 to 1942 (SAESMNREVTTLR). Serine 1969, serine 1980, serine 1983, and serine 1989 each carry phosphoserine. Over residues 1981 to 1995 (GPSPEPEGSPPAHPQ) the composition is skewed to pro residues.

The protein belongs to the TRAFAC class myosin-kinesin ATPase superfamily. Myosin family. In terms of assembly, myosin is a hexameric protein that consists of 2 heavy chain subunits (MHC), 2 alkali light chain subunits (MLC) and 2 regulatory light chain subunits (MLC-2). In terms of tissue distribution, high levels of expression are found in brain (highest in corpus callosum), heart, kidney, liver, lung, small intestine, colon and skeletal muscle. Expression is low in organs composed mainly of smooth muscle, such as aorta, uterus and urinary bladder. No detectable expression is found in thymus, spleen, placenta and lymphocytes.

Its function is as follows. Cellular myosin that appears to play a role in cytokinesis, cell shape, and specialized functions such as secretion and capping. The chain is Myosin-14 (MYH14) from Homo sapiens (Human).